We begin with the raw amino-acid sequence, 324 residues long: Viral cathepsin (324 aa).

A signal peptide spans 1–16 (MNKIVLYLLVYGATLG). Residues 17-113 (AAYDLLKAPS…VVLDRPPDKG (97 aa)) constitute a propeptide, activation peptide. Cystine bridges form between Cys134–Cys175, Cys168–Cys208, and Cys263–Cys311. Residue Cys137 is part of the active site. An N-linked (GlcNAc...) asparagine; by host glycan is attached at Asn159. Catalysis depends on residues His270 and Asn290.

This sequence belongs to the peptidase C1 family. In terms of processing, synthesized as an inactive proenzyme and activated by proteolytic removal of the inhibitory propeptide.

The catalysed reaction is Endopeptidase of broad specificity, hydrolyzing substrates of both cathepsin L and cathepsin B.. In terms of biological role, cysteine protease that plays an essential role in host liquefaction to facilitate horizontal transmission of the virus. May participate in the degradation of foreign protein expressed by the baculovirus system. This is Viral cathepsin (VCATH) from Antheraea pernyi nuclear polyhedrosis virus (ApNPV).